The chain runs to 429 residues: Probable M18 family aminopeptidase 2 (429 aa).

Zn(2+) contacts are provided by His82, His156, and His401.

It belongs to the peptidase M18 family. It depends on Zn(2+) as a cofactor.

In Azotobacter vinelandii (strain DJ / ATCC BAA-1303), this protein is Probable M18 family aminopeptidase 2.